Consider the following 104-residue polypeptide: Cell division protein FtsB (104 aa).

Residues 1 to 3 (MGK) lie on the Cytoplasmic side of the membrane. The helical transmembrane segment at 4 to 21 (LTLLLLVLLGWLQYSLWL) threads the bilayer. Over 22 to 104 (GKNGIHDYTR…NAQQGRPASQ (83 aa)) the chain is Periplasmic. Positions 33 to 62 (DEDVASQQGNNAKLKARNDRLFAEIDDLNG) form a coiled coil.

This sequence belongs to the FtsB family. Part of a complex composed of FtsB, FtsL and FtsQ.

The protein localises to the cell inner membrane. In terms of biological role, essential cell division protein. May link together the upstream cell division proteins, which are predominantly cytoplasmic, with the downstream cell division proteins, which are predominantly periplasmic. In Erwinia tasmaniensis (strain DSM 17950 / CFBP 7177 / CIP 109463 / NCPPB 4357 / Et1/99), this protein is Cell division protein FtsB.